A 142-amino-acid chain; its full sequence is Large ribosomal subunit protein uL13 (142 aa).

This sequence belongs to the universal ribosomal protein uL13 family. Part of the 50S ribosomal subunit.

Functionally, this protein is one of the early assembly proteins of the 50S ribosomal subunit, although it is not seen to bind rRNA by itself. It is important during the early stages of 50S assembly. The protein is Large ribosomal subunit protein uL13 of Shewanella baltica (strain OS223).